A 210-amino-acid chain; its full sequence is Probable GTP-binding protein EngB (210 aa).

Residues 25–199 (CGIEVAFAGR…RQKLDSWFSE (175 aa)) form the EngB-type G domain. GTP contacts are provided by residues 33–40 (GRSNAGKS), 60–64 (GRTQL), 78–81 (DLPG), 145–148 (TKAD), and 178–180 (FSS). Positions 40 and 62 each coordinate Mg(2+).

The protein belongs to the TRAFAC class TrmE-Era-EngA-EngB-Septin-like GTPase superfamily. EngB GTPase family. Mg(2+) serves as cofactor.

Functionally, necessary for normal cell division and for the maintenance of normal septation. The polypeptide is Probable GTP-binding protein EngB (Salmonella paratyphi C (strain RKS4594)).